An 87-amino-acid polypeptide reads, in one-letter code: Small ribosomal subunit protein bS18B (87 aa).

This sequence belongs to the bacterial ribosomal protein bS18 family. In terms of assembly, part of the 30S ribosomal subunit. Forms a tight heterodimer with protein bS6.

Functionally, binds as a heterodimer with protein bS6 to the central domain of the 16S rRNA, where it helps stabilize the platform of the 30S subunit. This is Small ribosomal subunit protein bS18B from Mycolicibacterium vanbaalenii (strain DSM 7251 / JCM 13017 / BCRC 16820 / KCTC 9966 / NRRL B-24157 / PYR-1) (Mycobacterium vanbaalenii).